We begin with the raw amino-acid sequence, 66 residues long: Beta-toxin Css6 (66 aa).

Residues 1–66 (KEGYLVNSYT…VWPLPNKTCN (66 aa)) enclose the LCN-type CS-alpha/beta domain. Cystine bridges form between C12-C65, C16-C41, C25-C46, and C29-C48. The residue at position 66 (N66) is an Asparagine amide.

It belongs to the long (4 C-C) scorpion toxin superfamily. Sodium channel inhibitor family. Beta subfamily. As to expression, expressed by the venom gland.

It localises to the secreted. In terms of biological role, beta toxins bind voltage-independently at site-4 of sodium channels (Nav) and shift the voltage of activation toward more negative potentials thereby affecting sodium channel activation and promoting spontaneous and repetitive firing. This Centruroides suffusus (Durango bark scorpion) protein is Beta-toxin Css6.